Consider the following 430-residue polypeptide: Endochitinase 46 (430 aa).

The first 22 residues, 1–22, serve as a signal peptide directing secretion; the sequence is MLSFLGKSVALLAALQATLSSA. Residues 23–35 constitute a propeptide that is removed on maturation; it reads SPLATEERSIEKR. A GH18 domain is found at 39-408; that stretch reads YANSVYFTNW…GTSHRALGGL (370 aa). Chitin-binding positions include 103–104 and 130–133; these read GT and GGWT. Catalysis depends on Glu-172, which acts as the Proton donor. Tyr-173 lines the chitin pocket. Asn-219 carries an N-linked (GlcNAc...) asparagine glycan. Residues 238–241 and Trp-385 each bind chitin; that span reads MAYD.

This sequence belongs to the glycosyl hydrolase 18 family. Chitinase class V subfamily.

The protein localises to the secreted. The enzyme catalyses Random endo-hydrolysis of N-acetyl-beta-D-glucosaminide (1-&gt;4)-beta-linkages in chitin and chitodextrins.. Functionally, secreted chitinase involved in the degradation of chitin, a component of the cell walls of fungi and exoskeletal elements of some animals (including worms and arthropods). Plays a morphogenetic role during apical growth, cell division and differentiation (cell wall morphogenesis). Also acts as an antifungal agent. Involved in the degradation and further assimilation of phytopathogenic fungi, namely mycoparasitism, the major mechanism accounting for the antagonistic activity against phytopathogenic fungi displayed by Trichoderma. The sequence is that of Endochitinase 46 (chit46) from Trichoderma harzianum (Hypocrea lixii).